Reading from the N-terminus, the 947-residue chain is DNA polymerase (947 aa).

The protein belongs to the DNA polymerase type-B family.

It carries out the reaction DNA(n) + a 2'-deoxyribonucleoside 5'-triphosphate = DNA(n+1) + diphosphate. The chain is DNA polymerase from Red sea bream iridovirus (RSIV).